The chain runs to 159 residues: Urease subunit beta 2 (159 aa).

The tract at residues 1-24 (MAKEPTKAAHPQPEQTKTNHKAHR) is disordered.

The protein belongs to the urease beta subunit family. In terms of assembly, heterotrimer of UreA (gamma), UreB (beta) and UreC (alpha) subunits. Three heterotrimers associate to form the active enzyme.

It localises to the cytoplasm. The catalysed reaction is urea + 2 H2O + H(+) = hydrogencarbonate + 2 NH4(+). The protein operates within nitrogen metabolism; urea degradation; CO(2) and NH(3) from urea (urease route): step 1/1. Its function is as follows. Disrupting the ure2 operon has no effect on urease activity, or pathogen survival in BALB/c mice when inoculated by gavage, but confers slightly enhanced resistance to low pH killing in vitro. The polypeptide is Urease subunit beta 2 (Brucella suis biovar 1 (strain 1330)).